Consider the following 172-residue polypeptide: R-phycocyanin-1 beta chain (172 aa).

N4-methylasparagine is present on Asn-72. Cys-82 serves as a coordination point for (2R,3E)-phycocyanobilin. Cys-153 serves as a coordination point for (2R,3E)-phycoerythrobilin.

The protein belongs to the phycobiliprotein family. As to quaternary structure, heterodimer of an alpha and a beta chain. Dimers further assemble into trimers and the trimers into hexamers. The basic functional unit of phycobiliproteins is a ring-shaped hexamer formed from two back-to-back trimers contacting via the alpha chain subunits. The trimers are composed of alpha/beta subunit heterodimers arranged around a three-fold axis of symmetry. The phycoerythrins also contain a gamma subunit which is located in the center of the hexamer. Contains two covalently linked bilin chromophores.

It is found in the plastid. The protein localises to the chloroplast thylakoid membrane. In terms of biological role, light-harvesting photosynthetic bile pigment-protein from the phycobiliprotein complex (phycobilisome, PBS). Phycocyanin is the major phycobiliprotein in the PBS rod. This chain is R-phycocyanin-1 beta chain (rpcB), found in Porphyridium purpureum (Red alga).